We begin with the raw amino-acid sequence, 232 residues long: Ornithine carbamoyltransferase (232 aa).

Residues glutamine 15, arginine 39, and 66–69 (HPTQ) each bind carbamoyl phosphate. L-ornithine-binding positions include asparagine 99, aspartate 163, and 167 to 168 (SM). Carbamoyl phosphate contacts are provided by residues 204 to 207 (HCLP) and threonine 232.

Belongs to the aspartate/ornithine carbamoyltransferase superfamily. OTCase family.

It is found in the cytoplasm. The catalysed reaction is carbamoyl phosphate + L-ornithine = L-citrulline + phosphate + H(+). Its pathway is amino-acid biosynthesis; L-arginine biosynthesis; L-arginine from L-ornithine and carbamoyl phosphate: step 1/3. In terms of biological role, reversibly catalyzes the transfer of the carbamoyl group from carbamoyl phosphate (CP) to the N(epsilon) atom of ornithine (ORN) to produce L-citrulline. The sequence is that of Ornithine carbamoyltransferase (argF) from Neisseria pharyngis.